We begin with the raw amino-acid sequence, 857 residues long: RNA-directed RNA polymerase 2a (857 aa).

The 114-residue stretch at 511-624 (KYCLEIDLSK…FSLLPPVGDP (114 aa)) folds into the RdRp catalytic domain. The tract at residues 785-857 (DDKRRTPTGS…PRERGGVTRA (73 aa)) is disordered. Polar residues-rich tracts occupy residues 804 to 816 (KVSQ…TRSQ) and 824 to 840 (FKSQ…SGWS). Residues 846-857 (VPPRERGGVTRA) are compositionally biased toward basic and acidic residues.

Belongs to the ssRNA positive-strand viruses RNA-directed RNA polymerase family. In terms of assembly, interacts with replication protein 1a.

The enzyme catalyses RNA(n) + a ribonucleoside 5'-triphosphate = RNA(n+1) + diphosphate. In terms of biological role, RNA-dependent RNA polymerase which replicates the viral genome composed of 3 RNA segments, RNA1, RNA2 and RNA3. The polypeptide is RNA-directed RNA polymerase 2a (Cucumis sativus (Cucumber)).